The sequence spans 85 residues: UPF0335 protein Plav_2034 (85 aa).

This sequence belongs to the UPF0335 family.

This Parvibaculum lavamentivorans (strain DS-1 / DSM 13023 / NCIMB 13966) protein is UPF0335 protein Plav_2034.